Reading from the N-terminus, the 727-residue chain is Sodium-dependent neutral amino acid transporter SLC6A17 (727 aa).

At 1 to 68 (MPKNSKVTQR…DRPAWNSKLQ (68 aa)) the chain is on the cytoplasmic side. A phosphoserine mark is found at serine 13 and serine 20. Residues 69–89 (YILAQIGFSVGLGNIWRFPYL) traverse the membrane as a helical segment. Over 90 to 96 (CQKNGGG) the chain is Extracellular. A helical membrane pass occupies residues 97 to 116 (AYLVPYLVLLIIIGIPLFFL). Over 117–140 (ELAVGQRIRRGSIGVWHYVCPRLG) the chain is Cytoplasmic. The chain crosses the membrane as a helical span at residues 141 to 161 (GIGFSSCIVCLFVGLYYNVII). At 162 to 224 (GWSVFYFFKS…NSISESGGLN (63 aa)) the chain is on the extracellular side. The N-linked (GlcNAc...) asparagine glycan is linked to asparagine 186. A helical transmembrane segment spans residues 225-243 (WKMTLCLLVAWSIVGMAVV). Residues 244–251 (KGIQSSGK) lie on the Cytoplasmic side of the membrane. The helical transmembrane segment at 252–269 (VMYFSSLFPYVVLACFLV) threads the bilayer. Residues 270–304 (RGLLLRGAVDGILHMFTPKLDKMLDPQVWREAATQ) are Extracellular-facing. Residues 305–322 (VFFALGLGFGGVIAFSSY) traverse the membrane as a helical segment. Over 323 to 333 (NKQDNNCHFDA) the chain is Cytoplasmic. The helical transmembrane segment at 334–355 (ALVSFINFFTSVLATLVVFAVL) threads the bilayer. The Extracellular segment spans residues 356 to 451 (GFKANIMNEK…FIAFTEAMTH (96 aa)). Residue tyrosine 377 is modified to Phosphotyrosine. Residue asparagine 393 is glycosylated (N-linked (GlcNAc...) asparagine). The helical transmembrane segment at 452 to 471 (FPASPFWSVMFFLMLINLGL) threads the bilayer. The Cytoplasmic segment spans residues 472–494 (GSMIGTMAGITTPIIDTFKVPKE). Residues 495-513 (MFTVGCCVFAFFVGLLFVQ) traverse the membrane as a helical segment. The Extracellular segment spans residues 514–528 (RSGNYFVTMFDDYSA). Residues 529–549 (TLPLTVIVILENIAVAWIYGT) traverse the membrane as a helical segment. Residues 550 to 569 (KKFMQELTEMLGFQPYRFYF) are Cytoplasmic-facing. Residues 570 to 591 (YMWKFVSPLCMAVLTTASIIQL) form a helical membrane-spanning segment. The Extracellular portion of the chain corresponds to 592-618 (GVSPPGYSAWIKEEAAERYLYFPNWAM). The chain crosses the membrane as a helical span at residues 619–641 (ALLITLIAVATLPIPVVFILRHF). Over 642–727 (HLLSDGSNTL…LLASTPESEL (86 aa)) the chain is Cytoplasmic. Phosphoserine is present on residues serine 665 and serine 701. Positions 680–727 (VPSEAPSPMPTHRSYLGPGSTSPLDNSNNPNGRYGSGYLLASTPESEL) are disordered. The span at 698 to 710 (GSTSPLDNSNNPN) shows a compositional bias: polar residues.

This sequence belongs to the sodium:neurotransmitter symporter (SNF) (TC 2.A.22) family. Expressed in the brain. The strongest expression levels in embryonic, postnatal, and adult stages are found in both cortical and hippocampal tissues.

It is found in the cytoplasmic vesicle. The protein localises to the secretory vesicle. It localises to the synaptic vesicle membrane. The protein resides in the postsynapse. Its subcellular location is the presynapse. The enzyme catalyses L-proline(in) + Na(+)(in) = L-proline(out) + Na(+)(out). It carries out the reaction L-leucine(in) + Na(+)(in) = L-leucine(out) + Na(+)(out). It catalyses the reaction glycine(in) + Na(+)(in) = glycine(out) + Na(+)(out). The catalysed reaction is L-alanine(in) + Na(+)(in) = L-alanine(out) + Na(+)(out). The enzyme catalyses L-glutamine(in) + Na(+)(in) = L-glutamine(out) + Na(+)(out). Synaptic vesicle transporter with apparent selectivity for neutral amino acids. The transport is sodium-coupled but chloride-independent, likely driven by the proton electrochemical gradient generated by vacuolar H(+)-ATPase in an overall electrogenic mechanism. May contribute to the synaptic uptake of neurotransmitter precursors in a process coupled in part to vesicle exocytosis. The chain is Sodium-dependent neutral amino acid transporter SLC6A17 from Mus musculus (Mouse).